The chain runs to 1006 residues: Cytosolic carboxypeptidase 3 (1006 aa).

One can recognise a Peptidase M14 domain in the interval 304 to 576; that stretch reads YPYTYSNLQE…HFCDSLLDYC (273 aa). The Zn(2+) site is built by histidine 368, glutamate 371, and histidine 464. Glutamate 540 acts as the Proton donor/acceptor in catalysis. The interval 790–810 is disordered; the sequence is ESHHQLKSKAKRCSSFQSKRT.

Belongs to the peptidase M14 family. It depends on Zn(2+) as a cofactor. As to expression, widely expressed. Expressed abundantly in tissues with m otile cilia such as testis, lung and trachea. Abundantly expressed in pituitary and kidney, moderately expressed in brain, eye, fat, pancreas, stomach, and adrenal.

The protein localises to the cytoplasm. It localises to the cytosol. The catalysed reaction is (L-glutamyl)(n+1)-gamma-L-glutamyl-L-glutamyl-[protein] + H2O = (L-glutamyl)(n)-gamma-L-glutamyl-L-glutamyl-[protein] + L-glutamate. In terms of biological role, metallocarboxypeptidase that mediates deglutamylation of tubulin and non-tubulin target proteins. Catalyzes the removal of polyglutamate side chains present on the gamma-carboxyl group of glutamate residues within the C-terminal tail of tubulin protein. Specifically cleaves tubulin long-side-chains, while it is not able to remove the branching point glutamate. Also catalyzes the removal of polyglutamate residues from the carboxy-terminus of non-tubulin proteins such as MYLK. May catalyze the hydrolysis of aspartate from the carboxy-terminus of target proteins. Does not show detyrosinase or deglycylase activities from the carboxy-terminus of target proteins. The sequence is that of Cytosolic carboxypeptidase 3 from Mus musculus (Mouse).